A 106-amino-acid chain; its full sequence is Iron-sulfur cluster assembly protein CyaY (106 aa).

It belongs to the frataxin family.

Involved in iron-sulfur (Fe-S) cluster assembly. May act as a regulator of Fe-S biogenesis. The protein is Iron-sulfur cluster assembly protein CyaY of Pectobacterium carotovorum subsp. carotovorum (strain PC1).